The primary structure comprises 598 residues: Elongation factor 4 (598 aa).

The tr-type G domain maps to K2 to E184. GTP is bound by residues D14–T19 and N131–D134.

The protein belongs to the TRAFAC class translation factor GTPase superfamily. Classic translation factor GTPase family. LepA subfamily.

The protein resides in the cell inner membrane. The enzyme catalyses GTP + H2O = GDP + phosphate + H(+). Functionally, required for accurate and efficient protein synthesis under certain stress conditions. May act as a fidelity factor of the translation reaction, by catalyzing a one-codon backward translocation of tRNAs on improperly translocated ribosomes. Back-translocation proceeds from a post-translocation (POST) complex to a pre-translocation (PRE) complex, thus giving elongation factor G a second chance to translocate the tRNAs correctly. Binds to ribosomes in a GTP-dependent manner. The chain is Elongation factor 4 from Photorhabdus laumondii subsp. laumondii (strain DSM 15139 / CIP 105565 / TT01) (Photorhabdus luminescens subsp. laumondii).